Reading from the N-terminus, the 818-residue chain is Glycerol-3-phosphate acyltransferase (818 aa).

Residues histidine 305–aspartate 310 carry the HXXXXD motif motif.

This sequence belongs to the GPAT/DAPAT family.

It is found in the cell inner membrane. The enzyme catalyses sn-glycerol 3-phosphate + an acyl-CoA = a 1-acyl-sn-glycero-3-phosphate + CoA. The protein operates within phospholipid metabolism; CDP-diacylglycerol biosynthesis; CDP-diacylglycerol from sn-glycerol 3-phosphate: step 1/3. The protein is Glycerol-3-phosphate acyltransferase of Photorhabdus laumondii subsp. laumondii (strain DSM 15139 / CIP 105565 / TT01) (Photorhabdus luminescens subsp. laumondii).